The primary structure comprises 262 residues: 27 kDa lipoprotein antigen (262 aa).

A signal peptide spans 1–28 (MSASCAVPRLTRFAVFAVAGATALSLSA). 2 stretches are compositionally biased toward low complexity: residues 28 to 57 (ACGSSNKSSSTSTSTSTSTSTVTSAAPSST) and 148 to 158 (STPGGASSTPP). 2 disordered regions span residues 28–60 (ACGSSNKSSSTSTSTSTSTSTVTSAAPSSTPNA) and 138–171 (VNGTCPKPHESTPGGASSTPPSGSPSPAPAKPAW). Residue cysteine 29 is the site of N-palmitoyl cysteine attachment. Cysteine 29 is lipidated: S-diacylglycerol cysteine.

It is found in the cell membrane. This chain is 27 kDa lipoprotein antigen (Mi43), found in Mycobacterium intracellulare.